The following is a 344-amino-acid chain: Nicotinate-nucleotide--dimethylbenzimidazole phosphoribosyltransferase (344 aa).

Glu311 functions as the Proton acceptor in the catalytic mechanism.

Belongs to the CobT family.

The enzyme catalyses 5,6-dimethylbenzimidazole + nicotinate beta-D-ribonucleotide = alpha-ribazole 5'-phosphate + nicotinate + H(+). Its pathway is nucleoside biosynthesis; alpha-ribazole biosynthesis; alpha-ribazole from 5,6-dimethylbenzimidazole: step 1/2. In terms of biological role, catalyzes the synthesis of alpha-ribazole-5'-phosphate from nicotinate mononucleotide (NAMN) and 5,6-dimethylbenzimidazole (DMB). The polypeptide is Nicotinate-nucleotide--dimethylbenzimidazole phosphoribosyltransferase (Aromatoleum aromaticum (strain DSM 19018 / LMG 30748 / EbN1) (Azoarcus sp. (strain EbN1))).